Here is a 106-residue protein sequence, read N- to C-terminus: UPF0145 protein VCM66_A0911 (106 aa).

It belongs to the UPF0145 family.

The protein is UPF0145 protein VCM66_A0911 of Vibrio cholerae serotype O1 (strain M66-2).